A 148-amino-acid polypeptide reads, in one-letter code: 3-dehydroquinate dehydratase (148 aa).

Residue Tyr23 is the Proton acceptor of the active site. Positions 74, 80, and 87 each coordinate substrate. The Proton donor role is filled by His100. Residues 101 to 102 and Arg111 each bind substrate; that span reads IS.

The protein belongs to the type-II 3-dehydroquinase family. In terms of assembly, homododecamer.

The enzyme catalyses 3-dehydroquinate = 3-dehydroshikimate + H2O. It participates in metabolic intermediate biosynthesis; chorismate biosynthesis; chorismate from D-erythrose 4-phosphate and phosphoenolpyruvate: step 3/7. In terms of biological role, catalyzes a trans-dehydration via an enolate intermediate. This is 3-dehydroquinate dehydratase from Halothermothrix orenii (strain H 168 / OCM 544 / DSM 9562).